We begin with the raw amino-acid sequence, 412 residues long: Putative competence-damage inducible protein (412 aa).

This sequence belongs to the CinA family.

The polypeptide is Putative competence-damage inducible protein (Bacillus cereus (strain ZK / E33L)).